Here is an 84-residue protein sequence, read N- to C-terminus: Small ribosomal subunit protein eS27 (84 aa).

A compositionally biased stretch (basic and acidic residues) spans 1–16; that stretch reads MPLAKDLLHPSPEEEK. The tract at residues 1 to 23 is disordered; the sequence is MPLAKDLLHPSPEEEKRKHKKKR. Residue Ser11 is modified to Phosphoserine. The C4-type zinc finger occupies 38-60; it reads PGCYKITTVFSHAQTVVLCVGCS.

This sequence belongs to the eukaryotic ribosomal protein eS27 family. In terms of assembly, component of the small ribosomal subunit. Part of the small subunit (SSU) processome, composed of more than 70 proteins and the RNA chaperone small nucleolar RNA (snoRNA) U3. Requires Zn(2+) as cofactor.

The protein localises to the cytoplasm. It is found in the nucleus. It localises to the nucleolus. Functionally, component of the small ribosomal subunit. The ribosome is a large ribonucleoprotein complex responsible for the synthesis of proteins in the cell. Required for proper rRNA processing and maturation of 18S rRNAs. Part of the small subunit (SSU) processome, first precursor of the small eukaryotic ribosomal subunit. During the assembly of the SSU processome in the nucleolus, many ribosome biogenesis factors, an RNA chaperone and ribosomal proteins associate with the nascent pre-rRNA and work in concert to generate RNA folding, modifications, rearrangements and cleavage as well as targeted degradation of pre-ribosomal RNA by the RNA exosome. This is Small ribosomal subunit protein eS27 from Mus musculus (Mouse).